We begin with the raw amino-acid sequence, 214 residues long: MRIILLGAPGAGKGTQAQFIMEKFGIPQISTGDMLRAAIKAGTELGKQAKAVIDAGQLVSDDIILGLIKERIAQADCEKGFLLDGFPRTIPQADGLKEMGINVDYVIEFDVADDVIVERMAGRRAHLPSGRTYHVVYNPPKVEGKDDVTGEDLVIREDDKEETVRARLNVYHTQTAPLIEYYGKEAAAGKTQYLKFDGTKQVSEVSADIAKALA.

ATP is bound at residue 10 to 15 (GAGKGT). The interval 30–59 (STGDMLRAAIKAGTELGKQAKAVIDAGQLV) is NMP. AMP-binding positions include T31, R36, 57-59 (QLV), 85-88 (GFPR), and Q92. Positions 122-159 (GRRAHLPSGRTYHVVYNPPKVEGKDDVTGEDLVIREDD) are LID. Residues R123 and 132–133 (TY) each bind ATP. Residues R156 and R167 each contribute to the AMP site. K200 contributes to the ATP binding site.

The protein belongs to the adenylate kinase family. Monomer.

It is found in the cytoplasm. The enzyme catalyses AMP + ATP = 2 ADP. It functions in the pathway purine metabolism; AMP biosynthesis via salvage pathway; AMP from ADP: step 1/1. Its function is as follows. Catalyzes the reversible transfer of the terminal phosphate group between ATP and AMP. Plays an important role in cellular energy homeostasis and in adenine nucleotide metabolism. The sequence is that of Adenylate kinase from Vibrio cholerae serotype O1 (strain ATCC 39541 / Classical Ogawa 395 / O395).